A 144-amino-acid chain; its full sequence is Giant hemoglobins B chain (144 aa).

A Globin domain is found at 3 to 144 (VCGPLQRLKV…LNVITNGIQG (142 aa)). Histidine 96 lines the heme b pocket.

It belongs to the globin family. Part of giant hemoglobin C1, V1 and V2. This worm has three different extracellular Hbs: two dissolved in the vascular blood, V1 (CA. 3,500 kDa) and V2 (CA. 400 kDa), and one in the coelomic fluid, C1 (CA. 400 kDa). V1 consists of four heme-containing, globin chains (B-E) and four linker chains (L1-L4). V2 consists of six globin chains (A-F) and C1 consists of five globin chains (A-E).

It is found in the secreted. It localises to the extracellular space. This is Giant hemoglobins B chain from Riftia pachyptila (Vent tube worm).